The sequence spans 728 residues: FAS1 domain-containing protein fsc1 (728 aa).

The N-terminal stretch at 1 to 21 (MNLQFRLYLLFILLFISFANG) is a signal peptide. The Vacuolar portion of the chain corresponds to 22–670 (KNEYEDKSTS…TKRQNRWRIT (649 aa)). 2 FAS1 domains span residues 29 to 151 (STSI…DNII) and 154 to 285 (PPPA…SSLI). Residue Asn89 is glycosylated (N-linked (GlcNAc...) asparagine). Residues Asn404 and Asn501 are each glycosylated (N-linked (GlcNAc...) asparagine). A helical membrane pass occupies residues 671 to 691 (FISISGLLLSVGICVLCYKIY). Residues 692–728 (FKFFRNRFMNQGEREPLLAPADSDTMAGRRNSSSLSV) are Cytoplasmic-facing.

Its subcellular location is the vacuole membrane. In terms of biological role, required for the fusion of autophagosomes with the vacuole. The polypeptide is FAS1 domain-containing protein fsc1 (fsc1) (Schizosaccharomyces pombe (strain 972 / ATCC 24843) (Fission yeast)).